The primary structure comprises 212 residues: 3-isopropylmalate dehydratase small subunit (212 aa).

Belongs to the LeuD family. LeuD type 1 subfamily. As to quaternary structure, heterodimer of LeuC and LeuD.

The enzyme catalyses (2R,3S)-3-isopropylmalate = (2S)-2-isopropylmalate. It participates in amino-acid biosynthesis; L-leucine biosynthesis; L-leucine from 3-methyl-2-oxobutanoate: step 2/4. In terms of biological role, catalyzes the isomerization between 2-isopropylmalate and 3-isopropylmalate, via the formation of 2-isopropylmaleate. This chain is 3-isopropylmalate dehydratase small subunit, found in Pseudomonas aeruginosa (strain LESB58).